The sequence spans 354 residues: Photosystem II protein D1 (354 aa).

An N-acetylthreonine modification is found at T2. Residue T2 is modified to Phosphothreonine. 3 helical membrane-spanning segments follow: residues 29-46 (YIGW…TATS), 118-133 (HFLL…EWEL), and 142-156 (WIAV…AATA). Residue H118 participates in chlorophyll a binding. Y126 is a binding site for pheophytin a. The [CaMn4O5] cluster site is built by D170 and E189. The helical transmembrane segment at 197 to 218 (FHMLGVAGVFGGSLFSAMHGSL) threads the bilayer. H198 contacts chlorophyll a. Residues H215 and 264-265 (SF) contribute to the a quinone site. Residue H215 coordinates Fe cation. H272 contacts Fe cation. The chain crosses the membrane as a helical span at residues 274 to 288 (FLAAWPVVGIWFTAL). Residues H332, E333, D342, and A344 each contribute to the [CaMn4O5] cluster site. Positions 345–354 (ASIEAPSLNG) are excised as a propeptide.

This sequence belongs to the reaction center PufL/M/PsbA/D family. PSII is composed of 1 copy each of membrane proteins PsbA, PsbB, PsbC, PsbD, PsbE, PsbF, PsbH, PsbI, PsbJ, PsbK, PsbL, PsbM, PsbT, PsbX, PsbY, PsbZ, Psb30/Ycf12, at least 3 peripheral proteins of the oxygen-evolving complex and a large number of cofactors. It forms dimeric complexes. The D1/D2 heterodimer binds P680, chlorophylls that are the primary electron donor of PSII, and subsequent electron acceptors. It shares a non-heme iron and each subunit binds pheophytin, quinone, additional chlorophylls, carotenoids and lipids. D1 provides most of the ligands for the Mn4-Ca-O5 cluster of the oxygen-evolving complex (OEC). There is also a Cl(-1) ion associated with D1 and D2, which is required for oxygen evolution. The PSII complex binds additional chlorophylls, carotenoids and specific lipids. serves as cofactor. In terms of processing, tyr-161 forms a radical intermediate that is referred to as redox-active TyrZ, YZ or Y-Z. Post-translationally, C-terminally processed by CTPA; processing is essential to allow assembly of the oxygen-evolving complex and thus photosynthetic growth.

The protein localises to the plastid. Its subcellular location is the chloroplast thylakoid membrane. The enzyme catalyses 2 a plastoquinone + 4 hnu + 2 H2O = 2 a plastoquinol + O2. Functionally, photosystem II (PSII) is a light-driven water:plastoquinone oxidoreductase that uses light energy to abstract electrons from H(2)O, generating O(2) and a proton gradient subsequently used for ATP formation. It consists of a core antenna complex that captures photons, and an electron transfer chain that converts photonic excitation into a charge separation. The D1/D2 (PsbA/PsbD) reaction center heterodimer binds P680, the primary electron donor of PSII as well as several subsequent electron acceptors. The polypeptide is Photosystem II protein D1 (Selaginella uncinata (Blue spike-moss)).